We begin with the raw amino-acid sequence, 166 residues long: 3-hydroxyacyl-[acyl-carrier-protein] dehydratase, mitochondrial (166 aa).

The transit peptide at 1 to 17 directs the protein to the mitochondrion; that stretch reads MLAKTVFPRGLLVLRSF. The MaoC-like domain maps to 34–125; that stretch reads ETRVFSSEDI…VQAIALRETK (92 aa).

As to quaternary structure, homodimer. Expressed in leaves, roots, siliques and flowers.

Its subcellular location is the mitochondrion. It catalyses the reaction a (3R)-hydroxyacyl-[ACP] = a (2E)-enoyl-[ACP] + H2O. It carries out the reaction (3R)-hydroxyhexadecanoyl-[ACP] = (2E)-hexadecenoyl-[ACP] + H2O. The catalysed reaction is (3R)-hydroxydecanoyl-[ACP] = (2E)-decenoyl-[ACP] + H2O. It functions in the pathway lipid metabolism; fatty acid biosynthesis. Functionally, 3-hydroxyl-[acyl-carrier-protein] (3-hydroxyl-ACP) dehydratase required for mitochondrial fatty acid synthesis (mtFAS). MtFAS are essential for photorespiration and plant development, probably by influencing mitochondrial membrane lipid composition and other lipid metabolic pathways. The sequence is that of 3-hydroxyacyl-[acyl-carrier-protein] dehydratase, mitochondrial from Arabidopsis thaliana (Mouse-ear cress).